The primary structure comprises 447 residues: Phospholipase A(1) DAD1, chloroplastic (447 aa).

A chloroplast-targeting transit peptide spans 1 to 46; the sequence is MRFSLSPVRPHSVVVPSLPKQDVVSYISGTTSNRQCRCVLTLPSPS. The GXSXG motif lies at 293 to 297; the sequence is GHSLG. Serine 295 serves as the catalytic Acyl-ester intermediate. Residues aspartate 352 and histidine 418 each act as charge relay system in the active site.

Belongs to the AB hydrolase superfamily. Lipase family. As to expression, expressed in flower buds, but not in leaves or roots. Restricted to the stamen filaments immediately before flower opening.

The protein resides in the plastid. It is found in the chloroplast. The enzyme catalyses a 1,2-diacyl-sn-glycero-3-phosphocholine + H2O = a 2-acyl-sn-glycero-3-phosphocholine + a fatty acid + H(+). The catalysed reaction is 1-hexadecanoyl-2-(9Z,12Z-octadecadienoyl)-sn-glycero-3-phosphocholine + H2O = 2-(9Z,12Z-octadecadienoyl)-sn-glycero-3-phosphocholine + hexadecanoate + H(+). Sn-1-specific phospholipase that releases free fatty acids from phospholipids. Low activity on galactolipids and triacylglycerols. Catalyzes the initial step of jasmonic acid biosynthesis. Not essential for jasmonate biosynthesis after wounding or upon pathogen infection. The protein is Phospholipase A(1) DAD1, chloroplastic of Arabidopsis thaliana (Mouse-ear cress).